Consider the following 101-residue polypeptide: Putative septation protein SpoVG (101 aa).

Residues 82 to 101 form a disordered region; that stretch reads ELKKGGAAPARATGTDPHED.

The protein belongs to the SpoVG family.

In terms of biological role, could be involved in septation. In Anaeromyxobacter dehalogenans (strain 2CP-1 / ATCC BAA-258), this protein is Putative septation protein SpoVG.